Here is a 339-residue protein sequence, read N- to C-terminus: Transaldolase (339 aa).

The active-site Schiff-base intermediate with substrate is Lys135.

Belongs to the transaldolase family. Type 1 subfamily. In terms of assembly, homodimer.

The protein localises to the cytoplasm. It catalyses the reaction D-sedoheptulose 7-phosphate + D-glyceraldehyde 3-phosphate = D-erythrose 4-phosphate + beta-D-fructose 6-phosphate. It participates in carbohydrate degradation; pentose phosphate pathway; D-glyceraldehyde 3-phosphate and beta-D-fructose 6-phosphate from D-ribose 5-phosphate and D-xylulose 5-phosphate (non-oxidative stage): step 2/3. In terms of biological role, transaldolase is important for the balance of metabolites in the pentose-phosphate pathway. The polypeptide is Transaldolase (Prochlorococcus marinus (strain MIT 9211)).